The chain runs to 514 residues: MAMAAAMGVASPYHAAHAAASTSCDSLRLLVAEGRPRRPRGVASSSSSSSSAGRRRRPLVFSPRAVSDSKSSQTCLDPDASTSVLGIILGGGAGTRLYPLTKKRAKPAVPLGANYRLIDIPVSNCLNSNISKIYVLTQFNSASLNRHLSRAYGNNIGGYKNEGFVEVLAAQQSPDNPNWFQGTADAVRQYLWLFEEHNVMEFLILAGDHLYRMDYEKFIQAHRETDSDITVAALPMDEKRATAFGLMKIDEEGRIVEFAEKPKGEQLKAMMVDTTILGLDDVRAKEMPYIASMGIYVISKNVMLQLLREQFPGANDFGSEVIPGATNIGMRVQAYLYDGYWEDIGTIEAFYNANLGITKKPVPDFSFYDRSAPIYTQPRHLPPSKVLDADVTDSVIGEGCVIKNCKIHHSVVGLRSCISEGAIIEDSLLMGADYYETEADKKLLGEKGGIPIGIGKNCHIRRAIIDKNARIGDNVKIINVDNVQEAARETDGYFIKSGIVTVIKDALLPSGTVI.

The transit peptide at 1-64 (MAMAAAMGVA…RRRPLVFSPR (64 aa)) directs the protein to the chloroplast. The disordered stretch occupies residues 35–74 (RPRRPRGVASSSSSSSSAGRRRRPLVFSPRAVSDSKSSQT). Low complexity predominate over residues 41-52 (GVASSSSSSSSA).

It belongs to the bacterial/plant glucose-1-phosphate adenylyltransferase family. As to quaternary structure, heterotetramer composed of two small and two large subunits. Expressed in leaves.

Its subcellular location is the plastid. It localises to the chloroplast. It is found in the amyloplast. The protein resides in the cytoplasm. The protein localises to the cytosol. The enzyme catalyses alpha-D-glucose 1-phosphate + ATP + H(+) = ADP-alpha-D-glucose + diphosphate. It participates in glycan biosynthesis; starch biosynthesis. Its activity is regulated as follows. Activated by 3'phosphoglycerate, inhibited by orthophosphate. Allosteric regulation. Inhibited by inorganic phosphate (Pi). Functionally, involved in synthesis of starch. Catalyzes the synthesis of ADP-glucose, a molecule that serves as an activated glycosyl donor for alpha-1,4-glucan synthesis. The chloroplastic isoform 1 is essential for starch synthesis in leaf chloroplasts and the cytosolic isoform 2 for synthesis in seed endosperm. This chain is Glucose-1-phosphate adenylyltransferase small subunit 2, chloroplastic/amyloplastic/cytosolic, found in Oryza sativa subsp. japonica (Rice).